The following is a 243-amino-acid chain: 1-(5-phosphoribosyl)-5-[(5-phosphoribosylamino)methylideneamino] imidazole-4-carboxamide isomerase (243 aa).

The Proton acceptor role is filled by aspartate 8. Catalysis depends on aspartate 129, which acts as the Proton donor.

This sequence belongs to the HisA/HisF family.

It is found in the cytoplasm. It carries out the reaction 1-(5-phospho-beta-D-ribosyl)-5-[(5-phospho-beta-D-ribosylamino)methylideneamino]imidazole-4-carboxamide = 5-[(5-phospho-1-deoxy-D-ribulos-1-ylimino)methylamino]-1-(5-phospho-beta-D-ribosyl)imidazole-4-carboxamide. It participates in amino-acid biosynthesis; L-histidine biosynthesis; L-histidine from 5-phospho-alpha-D-ribose 1-diphosphate: step 4/9. This chain is 1-(5-phosphoribosyl)-5-[(5-phosphoribosylamino)methylideneamino] imidazole-4-carboxamide isomerase, found in Brucella abortus (strain 2308).